We begin with the raw amino-acid sequence, 921 residues long: Sodium/calcium exchanger 2 (921 aa).

A signal peptide spans 1-20; it reads MAPLALVGVTLLLAAPPCSG. At 21–68 the chain is on the extracellular side; the sequence is AATPTPSLPPPPANDSDTSTGGCQGSYRCQPGVLLPVWEPDDPSLGDK. Positions 22–42 are disordered; it reads ATPTPSLPPPPANDSDTSTGG. N-linked (GlcNAc...) asparagine glycosylation is present at Asn-34. The helical transmembrane segment at 69–90 threads the bilayer; sequence AARAVVYFVAMVYMFLGVSIIA. The Cytoplasmic portion of the chain corresponds to 91–130; it reads DRFMAAIEVITSKEKEITITKANGETSVGTVRIWNETVSN. Residues 131–152 form a helical membrane-spanning segment; sequence LTLMALGSSAPEILLSVIEVCG. The Alpha-1 repeat unit spans residues 135–175; that stretch reads ALGSSAPEILLSVIEVCGHNFQAGELGPGTIVGSAAFNMFV. Topologically, residues 153–164 are extracellular; the sequence is HNFQAGELGPGT. Residues 165 to 185 form a helical membrane-spanning segment; that stretch reads IVGSAAFNMFVVIAVCIYVIP. Residues 186–196 lie on the Cytoplasmic side of the membrane; it reads AGESRKIKHLR. A helical transmembrane segment spans residues 197 to 219; sequence VFFVTASWSIFAYVWLYLILAVF. Residues 220-222 lie on the Extracellular side of the membrane; the sequence is SPG. Residues 223 to 246 form a helical membrane-spanning segment; it reads VVQVWEALLTLVFFPVCVVFAWMA. The Cytoplasmic portion of the chain corresponds to 247–720; that stretch reads DKRLLFYKYV…DGSREERLPS (474 aa). The segment at 248 to 267 is putative calmodulin-binding region; it reads KRLLFYKYVYKRYRTDPRSG. Calx-beta domains lie at 384 to 483 and 512 to 612; these read GAGE…VRLL and ATVT…IELG. Ca(2+) is bound by residues Glu-407, Asp-443, Asp-468, Asp-469, Ile-471, Glu-473, Glu-476, Asp-518, Asp-519, Asp-520, Glu-536, Asp-598, Glu-599, and Glu-600. The residue at position 622 (Ser-622) is a Phosphoserine. Ca(2+) is bound at residue Glu-665. A helical transmembrane segment spans residues 721-740; that stretch reads CFDYVMHFLTVFWKVLFACV. At 741-747 the chain is on the extracellular side; the sequence is PPTEYCH. Residues 748 to 770 traverse the membrane as a helical segment; that stretch reads GWACFGVSILVIGLLTALIGDLA. The Cytoplasmic segment spans residues 771–772; it reads SH. The helical transmembrane segment at 773 to 791 threads the bilayer; the sequence is FGCTVGLKDSVNAVVFVAL. The Alpha-2 repeat unit spans residues 790 to 826; it reads ALGTSIPDTFASKVAALQDQCADASIGNVTGSNAVNV. Residues 792-822 are Extracellular-facing; sequence GTSIPDTFASKVAALQDQCADASIGNVTGSN. An N-linked (GlcNAc...) asparagine glycan is attached at Asn-817. The helical transmembrane segment at 823 to 843 threads the bilayer; that stretch reads AVNVFLGLGVAWSVAAVYWAV. The Cytoplasmic segment spans residues 844 to 854; sequence QGRPFEVRTGT. Residues 855-875 form a helical membrane-spanning segment; sequence LAFSVTLFTVFAFVGIAVLLY. At 876 to 892 the chain is on the extracellular side; sequence RRRPHIGGELGGPRGPK. The chain crosses the membrane as a helical span at residues 893 to 909; sequence LATTALFLGLWLLYILF. The Cytoplasmic portion of the chain corresponds to 910–921; sequence ASLEAYCHIRGF.

The protein belongs to the Ca(2+):cation antiporter (CaCA) (TC 2.A.19) family. SLC8 subfamily.

It is found in the cell membrane. The protein localises to the basolateral cell membrane. The protein resides in the perikaryon. It localises to the cell projection. Its subcellular location is the dendrite. It is found in the dendritic spine. It carries out the reaction Ca(2+)(in) + 3 Na(+)(out) = Ca(2+)(out) + 3 Na(+)(in). Its activity is regulated as follows. Calcium transport is down-regulated by Na(+) and stimulated by Ca(2+). In terms of biological role, mediates the electrogenic exchange of Ca(2+) against Na(+) ions across the cell membrane, and thereby contributes to the regulation of cytoplasmic Ca(2+) levels and Ca(2+)-dependent cellular processes. Contributes to cellular Ca(2+) homeostasis in excitable cells. Contributes to the rapid decrease of cytoplasmic Ca(2+) levels back to baseline after neuronal activation, and thereby contributes to modulate synaptic plasticity, learning and memory. Plays a role in regulating urinary Ca(2+) and Na(+) excretion. In Homo sapiens (Human), this protein is Sodium/calcium exchanger 2 (SLC8A2).